We begin with the raw amino-acid sequence, 437 residues long: O-methyltransferase 10 (437 aa).

S-adenosyl-L-methionine contacts are provided by glycine 259, glutamate 282, asparagine 315, and methionine 316. Catalysis depends on histidine 335, which acts as the Proton acceptor.

It belongs to the class I-like SAM-binding methyltransferase superfamily. Cation-independent O-methyltransferase family. COMT subfamily.

It carries out the reaction (3,5-dichloro-2,4,6-trihydroxyphenyl)hexan-1-one + S-adenosyl-L-methionine = 1-(3,5-dichloro-2,6-dihydroxy-4-methoxyphenyl)hexan-1-one + S-adenosyl-L-homocysteine + H(+). The protein is O-methyltransferase 10 (omt10) of Dictyostelium discoideum (Social amoeba).